The chain runs to 191 residues: Thioredoxin F-type, chloroplastic (191 aa).

The region spanning lysine 68–serine 190 is the Thioredoxin domain. Residues cysteine 115 and cysteine 118 each act as nucleophile in the active site. Cysteines 115 and 118 form a disulfide.

This sequence belongs to the thioredoxin family. Plant F-type subfamily. As to quaternary structure, forms a complex with heterodimeric ferredoxin-thioredoxin reductase (FTR) and ferredoxin.

The protein localises to the plastid. Its subcellular location is the chloroplast. Participates in various redox reactions through the reversible oxidation of the active center dithiol to a disulfide. The F form is known to activate a number of enzymes of the photosynthetic carbon cycle. The polypeptide is Thioredoxin F-type, chloroplastic (Mesembryanthemum crystallinum (Common ice plant)).